We begin with the raw amino-acid sequence, 198 residues long: MESNKMVVGVLLIAAFALPALALFERDVITHETIEAVLKKSTPNSNTMLQEDAINALTGKTLISQTILEETLLKNGVVGGSIPCGESCVYIPCISSLLGCSCKSKVCYKNSLALPTLEKDVITPEALEAVLKSNGGAIVNTKTIISNAIFEETLLNNANHVLGGIPCAESCVYIPCLTSAIGCSCKSKVCYRNSLALN.

Residues 1–22 (MESNKMVVGVLLIAAFALPALA) form the signal peptide. Residues 23–79 (LFERDVITHETIEAVLKKSTPNSNTMLQEDAINALTGKTLISQTILEETLLKNGVVG) constitute a propeptide that is removed on maturation. 3 cysteine pairs are disulfide-bonded: Cys-84/Cys-100, Cys-88/Cys-102, and Cys-93/Cys-107. Positions 111-163 (SLALPTLEKDVITPEALEAVLKSNGGAIVNTKTIISNAIFEETLLNNANHVLG) are excised as a propeptide. 3 disulfides stabilise this stretch: Cys-167–Cys-183, Cys-171–Cys-185, and Cys-176–Cys-190. A propeptide spanning residues 194 to 198 (SLALN) is cleaved from the precursor.

Belongs to the cyclotide family. Bracelet subfamily. In terms of processing, these are cyclic peptides. The mature peptides contain 3 disulfide bonds each.

Probably participates in a plant defense mechanism. This chain is Cyclotides mra4/mra5, found in Melicytus ramiflorus (Whitey wood).